We begin with the raw amino-acid sequence, 152 residues long: Adenosine 5'-monophosphoramidase HNT1 (152 aa).

In terms of domain architecture, HIT spans 8-119 (IFCKIIKGEI…IPKKDEATGL (112 aa)). AMP contacts are provided by residues 33–34 (DI), asparagine 93, 99–101 (HQV), and 106–108 (HFH). Residues 104–108 (HVHFH) carry the Histidine triad motif motif. Histidine 106 (tele-AMP-histidine intermediate) is an active-site residue.

Belongs to the HINT family. In terms of assembly, homodimer. The cofactor is Mg(2+).

It carries out the reaction adenosine 5'-phosphoramidate + H2O = AMP + NH4(+). Its function is as follows. Hydrolyzes adenosine 5'-monophosphoramidate substrates such as AMP-morpholidate, AMP-N-alanine methyl ester, AMP-alpha-acetyl lysine methyl ester and AMP-NH2. The polypeptide is Adenosine 5'-monophosphoramidase HNT1 (Candida albicans (strain SC5314 / ATCC MYA-2876) (Yeast)).